Consider the following 615-residue polypeptide: Dihydroxy-acid dehydratase (615 aa).

Asp81 provides a ligand contact to Mg(2+). Cys122 provides a ligand contact to [2Fe-2S] cluster. Residues Asp123 and Lys124 each contribute to the Mg(2+) site. N6-carboxylysine is present on Lys124. Cys195 is a [2Fe-2S] cluster binding site. Residue Glu491 participates in Mg(2+) binding. Ser517 acts as the Proton acceptor in catalysis.

The protein belongs to the IlvD/Edd family. In terms of assembly, homodimer. Requires [2Fe-2S] cluster as cofactor. Mg(2+) is required as a cofactor.

The catalysed reaction is (2R)-2,3-dihydroxy-3-methylbutanoate = 3-methyl-2-oxobutanoate + H2O. It carries out the reaction (2R,3R)-2,3-dihydroxy-3-methylpentanoate = (S)-3-methyl-2-oxopentanoate + H2O. Its pathway is amino-acid biosynthesis; L-isoleucine biosynthesis; L-isoleucine from 2-oxobutanoate: step 3/4. It functions in the pathway amino-acid biosynthesis; L-valine biosynthesis; L-valine from pyruvate: step 3/4. Functions in the biosynthesis of branched-chain amino acids. Catalyzes the dehydration of (2R,3R)-2,3-dihydroxy-3-methylpentanoate (2,3-dihydroxy-3-methylvalerate) into 2-oxo-3-methylpentanoate (2-oxo-3-methylvalerate) and of (2R)-2,3-dihydroxy-3-methylbutanoate (2,3-dihydroxyisovalerate) into 2-oxo-3-methylbutanoate (2-oxoisovalerate), the penultimate precursor to L-isoleucine and L-valine, respectively. The polypeptide is Dihydroxy-acid dehydratase (Novosphingobium aromaticivorans (strain ATCC 700278 / DSM 12444 / CCUG 56034 / CIP 105152 / NBRC 16084 / F199)).